The primary structure comprises 1235 residues: DNA polymerase (1235 aa).

The DOD-type homing endonuclease domain occupies 773–887 (LLGYYISSGD…LILLLNSIGV (115 aa)).

Belongs to the DNA polymerase type-B family. In terms of processing, this protein undergoes a protein self splicing that involves a post-translational excision of the intervening region (intein) followed by peptide ligation.

The catalysed reaction is DNA(n) + a 2'-deoxyribonucleoside 5'-triphosphate = DNA(n+1) + diphosphate. This is DNA polymerase (pol) from Pyrococcus horikoshii (strain ATCC 700860 / DSM 12428 / JCM 9974 / NBRC 100139 / OT-3).